Here is a 429-residue protein sequence, read N- to C-terminus: MKPVKKKKTEEPELEPLCCCEYIDRNGEKNHVAACLCDCQDLDEGCDRWLTCKSLRPETCERITDTISDRLRIPWLRGAKKVNISILPPLVLLPVLLRVASWHFLLGVVVLTSLPMLALWYYYLTHRRKEQTLFFLSLGLFSLGYMYYVFLQEVVPQGHVGPAQLALLTCGLFLILVALYRAKKNPGYLSNPACNDKSPSNSQIECPIKKGQEKTKGFPGTDTSGSLNNRTLKDDAKGSSRVGLDSPAKSKEDWCAKCQLVRPARAWHCRICGICVRRMDHHCVWINSCVGESNHQAFILALSIFLLTSVYGISLTLNTICRDRSLFTALFYCPGVYANYSSALSFTCVWYSVIITAGMAYIFLIQLINISYNVTEREVQQALRQKTGRRLLCGLIVDTGQYNRGFLRNWLQFSTLGTRTVHTPAEDIV.

At 1–81 the chain is on the cytoplasmic side; sequence MKPVKKKKTE…RIPWLRGAKK (81 aa). The chain crosses the membrane as a helical span at residues 82 to 102; sequence VNISILPPLVLLPVLLRVASW. A topological domain (lumenal) is located at residue His103. The helical transmembrane segment at 104–124 threads the bilayer; sequence FLLGVVVLTSLPMLALWYYYL. Over 125 to 130 the chain is Cytoplasmic; the sequence is THRRKE. The chain crosses the membrane as a helical span at residues 131–151; sequence QTLFFLSLGLFSLGYMYYVFL. Topologically, residues 152-159 are lumenal; the sequence is QEVVPQGH. A helical transmembrane segment spans residues 160–180; sequence VGPAQLALLTCGLFLILVALY. Topologically, residues 181–296 are cytoplasmic; sequence RAKKNPGYLS…NSCVGESNHQ (116 aa). The segment at 212–247 is disordered; that stretch reads QEKTKGFPGTDTSGSLNNRTLKDDAKGSSRVGLDSP. The span at 221–230 shows a compositional bias: polar residues; sequence TDTSGSLNNR. In terms of domain architecture, DHHC spans 253–303; it reads DWCAKCQLVRPARAWHCRICGICVRRMDHHCVWINSCVGESNHQAFILALS. Cys283 (S-palmitoyl cysteine intermediate) is an active-site residue. The chain crosses the membrane as a helical span at residues 297–317; that stretch reads AFILALSIFLLTSVYGISLTL. At 318-347 the chain is on the lumenal side; sequence NTICRDRSLFTALFYCPGVYANYSSALSFT. A helical transmembrane segment spans residues 348-368; the sequence is CVWYSVIITAGMAYIFLIQLI. Residues 369-429 are Cytoplasmic-facing; sequence NISYNVTERE…TVHTPAEDIV (61 aa). The segment at 426-429 is interaction with NOS1; that stretch reads EDIV.

The protein belongs to the DHHC palmitoyltransferase family. Interacts with NOS1. As to expression, expressed in the brain (at protein level), with highest levels in olfactory bulb, piriform cortex and hippocampus.

It localises to the golgi apparatus membrane. Its subcellular location is the golgi apparatus. It is found in the trans-Golgi network membrane. The catalysed reaction is L-cysteinyl-[protein] + hexadecanoyl-CoA = S-hexadecanoyl-L-cysteinyl-[protein] + CoA. Palmitoyltransferase that could catalyze the addition of palmitate onto various protein substrates and be involved in a variety of cellular processes. Palmitoyltransferase that mediates palmitoylation of KCNMA1, regulating localization of KCNMA1 to the plasma membrane. May be involved in NOS1 regulation and targeting to the synaptic membrane. This Rattus norvegicus (Rat) protein is Palmitoyltransferase ZDHHC23.